The chain runs to 227 residues: Small ribosomal subunit protein uS3 (227 aa).

One can recognise a KH type-2 domain in the interval I39–K108.

The protein belongs to the universal ribosomal protein uS3 family. In terms of assembly, part of the 30S ribosomal subunit. Forms a tight complex with proteins S10 and S14.

Its function is as follows. Binds the lower part of the 30S subunit head. Binds mRNA in the 70S ribosome, positioning it for translation. This Persephonella marina (strain DSM 14350 / EX-H1) protein is Small ribosomal subunit protein uS3.